Consider the following 541-residue polypeptide: Zingiberene synthase (541 aa).

Mg(2+) is bound by residues aspartate 295, aspartate 299, asparagine 439, serine 443, and glutamate 447. The short motif at aspartate 295–aspartate 299 is the DDXXD motif element.

The protein belongs to the terpene synthase family. Mg(2+) serves as cofactor. Mn(2+) is required as a cofactor.

It localises to the cytoplasm. It carries out the reaction (2E,6E)-farnesyl diphosphate = alpha-zingiberene + diphosphate. It functions in the pathway secondary metabolite biosynthesis; terpenoid biosynthesis. Functionally, sesquiterpene synthase converting farnesyl diphosphate into two major products, zingiberene &gt; beta-sesquiphellandrene, and five minor products, 7-epi-sesquithujene, sesquisabinene A, (E)-alpha-bergamotene, (E)-beta-farnesene and beta-bisabolene. Can also accept geranyl diphosphate as substrate, producing nine monoterpenes, with myrcene, limonene and alpha-terpinolene as the major products. The chain is Zingiberene synthase (TPS1) from Sorghum bicolor (Sorghum).